Reading from the N-terminus, the 357-residue chain is Mannonate dehydratase (357 aa).

The protein belongs to the mannonate dehydratase family. It depends on Fe(2+) as a cofactor. Mn(2+) serves as cofactor.

It carries out the reaction D-mannonate = 2-dehydro-3-deoxy-D-gluconate + H2O. It participates in carbohydrate metabolism; pentose and glucuronate interconversion. Its function is as follows. Catalyzes the dehydration of D-mannonate. The polypeptide is Mannonate dehydratase (Enterococcus faecalis (strain ATCC 700802 / V583)).